A 46-amino-acid polypeptide reads, in one-letter code: Cysteine-rich venom protein asurin-1 (46 aa).

Belongs to the CRISP family. Post-translationally, contains 8 disulfide bonds. Expressed by the venom gland.

It is found in the secreted. Its function is as follows. Blocks contraction of smooth muscle elicited by high potassium-induced depolarization, but does not block caffeine-stimulated contraction. May target voltage-gated calcium channels on smooth muscle. The sequence is that of Cysteine-rich venom protein asurin-1 from Austrelaps superbus (Lowland copperhead snake).